We begin with the raw amino-acid sequence, 454 residues long: MKNKVRTIHMVGIGGSGMSGIAEVLLNLGYAVHGSDMSDSAVVRRLRKIGAEIFIGHGAGNVSDAEVLVKSTAVRDDNPEVLAAVEKGIPIIPRAEMLAELMRLRTGIAIAGTHGKTTTTSLTAAIFDVAGKDPTVIIGGRLNAYGANARLGEGEYLIAEADESDGSFLCLFPIVNVVTNVDMDHVDFYAGQKEIDEAFVTFMNKVPFYGANVVCGDDPGVRRLLPQVKRRVVTYGFGKDNALRAEVTSCAETSVFTVFLRGGRLGEVHLGQPGRHNILNALAAIGVALEAGISPEHCIEGLARFGGVGRRFERRGERDGVTVVDDYGHHPVEIAATLATARSVYPDRRLVVVFQPHRFSRTQALFGEFCKVFEPVDKLLLTEIYPASEKPIPGVSGQSLAQGIRQVSNTDVTYYQSFDEILAALPGVLRPGDVLLTLGAGSVTTIGQRYVAGE.

112 to 118 (GTHGKTT) contributes to the ATP binding site.

The protein belongs to the MurCDEF family.

It localises to the cytoplasm. It carries out the reaction UDP-N-acetyl-alpha-D-muramate + L-alanine + ATP = UDP-N-acetyl-alpha-D-muramoyl-L-alanine + ADP + phosphate + H(+). Its pathway is cell wall biogenesis; peptidoglycan biosynthesis. In terms of biological role, cell wall formation. The polypeptide is UDP-N-acetylmuramate--L-alanine ligase (Nitratidesulfovibrio vulgaris (strain ATCC 29579 / DSM 644 / CCUG 34227 / NCIMB 8303 / VKM B-1760 / Hildenborough) (Desulfovibrio vulgaris)).